A 381-amino-acid chain; its full sequence is Guanine nucleotide-binding protein G(olf) subunit alpha (381 aa).

A disordered region spans residues 1-25; that stretch reads MGCLGNSSKTAEDQGVDEKERREAN. Residue glycine 2 is the site of N-palmitoyl glycine attachment. A lipid anchor (S-palmitoyl cysteine) is attached at cysteine 3. Residues 10–25 show a composition bias toward basic and acidic residues; the sequence is TAEDQGVDEKERREAN. One can recognise a G-alpha domain in the interval 41–381; sequence ATHRLLLLGA…RMHLKQYELL (341 aa). The interval 44–57 is G1 motif; that stretch reads RLLLLGAGESGKST. GTP is bound by residues glutamate 52, serine 53, glycine 54, lysine 55, serine 56, and threonine 57. Position 56 (serine 56) interacts with Mg(2+). The residue at position 178 (threonine 178) is a Phosphothreonine. Residues 183 to 191 are G2 motif; the sequence is DLLRCRVLT. Residues leucine 185, arginine 186, and threonine 191 each contribute to the GTP site. Mg(2+)-binding residues include threonine 191 and aspartate 210. Residues 206–215 form a G3 motif region; that stretch reads FHMFDVGGQR. Residues glycine 213, asparagine 279, lysine 280, aspartate 282, and alanine 353 each contribute to the GTP site. Residues 275-282 form a G4 motif region; that stretch reads ILFLNKQD. The interval 351–356 is G5 motif; that stretch reads TCAVDT.

Belongs to the G-alpha family. G(s) subfamily. G proteins are composed of 3 units; alpha, beta and gamma. The alpha chain contains the guanine nucleotide binding site. Interacts with GAS2L2. Interacts (GDP-bound form) with RIC8B (via C-terminus); promoting GNAL folding and association with the plasma membrane.

The protein resides in the cell membrane. The enzyme catalyses GTP + H2O = GDP + phosphate + H(+). Its function is as follows. Guanine nucleotide-binding protein (G protein) involved as transducer in olfactory signal transduction controlled by G protein-coupled receptors (GPCRs). Contains the guanine nucleotide binding site and alternates between an active, GTP-bound state and an inactive, GDP-bound state. Signaling by an activated GPCR promotes GDP release and GTP binding. The alpha subunit has a low GTPase activity that converts bound GTP to GDP, thereby terminating the signal. Both GDP release and GTP hydrolysis are modulated by numerous regulatory proteins. GNAL/G(olf) alpha specifically mediates olfactory signal transduction within the olfactory neuroepithelium and the basal ganglia following GPCRs activation. Acts by promoting the specific activation of adenylyl cyclase ADCY3, resulting in increased levels of the signaling molecule cAMP. The polypeptide is Guanine nucleotide-binding protein G(olf) subunit alpha (Rattus norvegicus (Rat)).